We begin with the raw amino-acid sequence, 163 residues long: RxLR effector protein PITG_13625 (163 aa).

The N-terminal stretch at 1–23 (MKVSKAIVALAALCMALLAPAAG) is a signal peptide. The RxLR-dEER motif lies at 37–52 (RHLRQESAELATTPEE).

It belongs to the RxLR effector family.

Its subcellular location is the secreted. It is found in the host cell membrane. Functionally, effector that enhances P.infestans colonization of Nicotiana benthamiana leaves. In Phytophthora infestans (strain T30-4) (Potato late blight agent), this protein is RxLR effector protein PITG_13625.